Reading from the N-terminus, the 213-residue chain is Thiamine-phosphate synthase (213 aa).

4-amino-2-methyl-5-(diphosphooxymethyl)pyrimidine-binding positions include glutamine 40–lysine 44 and asparagine 75. Mg(2+) is bound by residues aspartate 76 and aspartate 95. Serine 113 is a 4-amino-2-methyl-5-(diphosphooxymethyl)pyrimidine binding site. 2-[(2R,5Z)-2-carboxy-4-methylthiazol-5(2H)-ylidene]ethyl phosphate is bound at residue threonine 139 to serine 141. A 4-amino-2-methyl-5-(diphosphooxymethyl)pyrimidine-binding site is contributed by lysine 142. 2-[(2R,5Z)-2-carboxy-4-methylthiazol-5(2H)-ylidene]ethyl phosphate-binding positions include glycine 171 and isoleucine 191–serine 192.

This sequence belongs to the thiamine-phosphate synthase family. Mg(2+) serves as cofactor.

It catalyses the reaction 2-[(2R,5Z)-2-carboxy-4-methylthiazol-5(2H)-ylidene]ethyl phosphate + 4-amino-2-methyl-5-(diphosphooxymethyl)pyrimidine + 2 H(+) = thiamine phosphate + CO2 + diphosphate. The catalysed reaction is 2-(2-carboxy-4-methylthiazol-5-yl)ethyl phosphate + 4-amino-2-methyl-5-(diphosphooxymethyl)pyrimidine + 2 H(+) = thiamine phosphate + CO2 + diphosphate. The enzyme catalyses 4-methyl-5-(2-phosphooxyethyl)-thiazole + 4-amino-2-methyl-5-(diphosphooxymethyl)pyrimidine + H(+) = thiamine phosphate + diphosphate. It functions in the pathway cofactor biosynthesis; thiamine diphosphate biosynthesis; thiamine phosphate from 4-amino-2-methyl-5-diphosphomethylpyrimidine and 4-methyl-5-(2-phosphoethyl)-thiazole: step 1/1. In terms of biological role, condenses 4-methyl-5-(beta-hydroxyethyl)thiazole monophosphate (THZ-P) and 2-methyl-4-amino-5-hydroxymethyl pyrimidine pyrophosphate (HMP-PP) to form thiamine monophosphate (TMP). The protein is Thiamine-phosphate synthase of Staphylococcus aureus (strain MRSA252).